The primary structure comprises 117 residues: Immunoglobulin kappa variable 1D-43 (117 aa).

Residues 1–22 form the signal peptide; sequence MDMRVPAQRLGLLLLWFPGARC. The tract at residues 23–45 is framework-1; sequence AIRMTQSPFSLSASVGDRVTITC. Positions 23–117 constitute an Ig-like domain; that stretch reads AIRMTQSPFS…YYCQQYYSTP (95 aa). The cysteines at positions 45 and 110 are disulfide-linked. Residues 46 to 56 form a complementarity-determining-1 region; it reads WASQGISSYLA. A framework-2 region spans residues 57-71; sequence WYQQKPAKAPKLFIY. Positions 72–78 are complementarity-determining-2; the sequence is YASSLQS. Residues 79-110 are framework-3; sequence GVPSRFSGSGSGTDYTLTISSLQPEDFATYYC. Residues 111-117 form a complementarity-determining-3 region; sequence QQYYSTP.

Immunoglobulins are composed of two identical heavy chains and two identical light chains; disulfide-linked.

It localises to the secreted. The protein localises to the cell membrane. In terms of biological role, v region of the variable domain of immunoglobulin light chains that participates in the antigen recognition. Immunoglobulins, also known as antibodies, are membrane-bound or secreted glycoproteins produced by B lymphocytes. In the recognition phase of humoral immunity, the membrane-bound immunoglobulins serve as receptors which, upon binding of a specific antigen, trigger the clonal expansion and differentiation of B lymphocytes into immunoglobulins-secreting plasma cells. Secreted immunoglobulins mediate the effector phase of humoral immunity, which results in the elimination of bound antigens. The antigen binding site is formed by the variable domain of one heavy chain, together with that of its associated light chain. Thus, each immunoglobulin has two antigen binding sites with remarkable affinity for a particular antigen. The variable domains are assembled by a process called V-(D)-J rearrangement and can then be subjected to somatic hypermutations which, after exposure to antigen and selection, allow affinity maturation for a particular antigen. In Homo sapiens (Human), this protein is Immunoglobulin kappa variable 1D-43.